The primary structure comprises 456 residues: Putative sodium-coupled neutral amino acid transporter 11 (456 aa).

Residues 1–25 (MRAGPRRQHLLPPQDNRAAVGYQRQ) are disordered. The helical transmembrane segment at 58 to 78 (FNVVNSIIGSGIIDFSLILLI) threads the bilayer. An N-linked (GlcNAc...) asparagine glycan is attached at Asn-94. 6 helical membrane-spanning segments follow: residues 98–118 (GFPGYILLSVLQFLYPFIAMI), 143–163 (VFIGRHFIIGLSTVTFTLPLS), 171–191 (LGKVSLISTGLTTLILGIVMA), 206–226 (AWVFAKPNAIQAVGVMSFAFI), 252–272 (MSIVISVFICIFFATCGYLTF), and 291–313 (VTFGRFCYGVTVILTYPMECFVT). N-linked (GlcNAc...) asparagine glycosylation is present at Asn-325. 3 consecutive transmembrane segments (helical) span residues 329-349 (VFHIVVTVMVITVATLVSLLI), 351-371 (CLGIVLELNGVLCATPLIFII), and 390-410 (IMSYVMLPIGAAVMVFGFVMA).

It belongs to the amino acid/polyamine transporter 2 family.

Its subcellular location is the membrane. In terms of biological role, putative sodium-dependent amino acid/proton antiporter. The chain is Putative sodium-coupled neutral amino acid transporter 11 (SLC38A11) from Macaca fascicularis (Crab-eating macaque).